Here is a 1257-residue protein sequence, read N- to C-terminus: ATP-binding cassette sub-family B member 5 (1257 aa).

The disordered stretch occupies residues 1–24; sequence MENSERAEEMQENYQRNGTAEEQP. Residue Asn-17 is glycosylated (N-linked (GlcNAc...) asparagine). A helical membrane pass occupies residues 49–69; it reads ILGILASLVNGACLPLMPLVL. The ABC transmembrane type-1 1 domain maps to 49-350; the sequence is ILGILASLVN…AAVPHFETFA (302 aa). Residues Asn-85 and Asn-91 are each glycosylated (N-linked (GlcNAc...) asparagine). A run of 5 helical transmembrane segments spans residues 110-130, 181-201, 203-223, 294-314, and 322-342; these read YVGI…LWII, KIAL…VGLV, GWKL…SAAA, VYFF…SLIL, and IGTV…IGAA. Asn-371, Asn-390, and Asn-423 each carry an N-linked (GlcNAc...) asparagine glycan. One can recognise an ABC transporter 1 domain in the interval 386–622; sequence VEFKNVSFNY…RGLYYSLVMS (237 aa). 421 to 428 is an ATP binding site; that stretch reads GLNGSGKS. 2 helical membrane passes run 693 to 713 and 737 to 757; these read VLGT…SIIF and MIFV…GLFY. The 288-residue stretch at 693 to 980 folds into the ABC transmembrane type-1 2 domain; the sequence is VLGTLASVLN…TLVLAPEYSK (288 aa). 2 N-linked (GlcNAc...) asparagine glycosylation sites follow: Asn-789 and Asn-819. Residues 827–847 form a helical membrane-spanning segment; sequence VIISFIYGWEMTFLILSIAPV. The N-linked (GlcNAc...) asparagine glycan is linked to Asn-910. The next 2 membrane-spanning stretches (helical) occupy residues 917–937 and 954–974; these read IIGS…AAGF and MFIV…TLVL. The ABC transporter 2 domain occupies 1015-1253; the sequence is LEFREVSFFY…RDIYFKLVNA (239 aa). ATP is bound at residue 1050–1057; sequence GSSGCGKS. N-linked (GlcNAc...) asparagine glycans are attached at residues Asn-1104 and Asn-1188.

The protein belongs to the ABC transporter superfamily. ABCB family. Multidrug resistance exporter (TC 3.A.1.201) subfamily. As to expression, expressed by CD133-expressing progenitor cells among epidermal melanocytes (at protein level). Widely expressed with specific expression in pigment cells. Highly expressed in several malignant tissues: highly expressed in clinical melanomas, with low expression in normal skin. In melanoma, marks malignant melanoma-initiating cells (MMIC), in which clinical virulence resides as a consequence of unlimited self-renewal capacity, resulting in inexorable tumor progression and metastasis. Also highly expressed in a number of leukemia cells. Expressed in basal limbal epithelium.

Its subcellular location is the cell membrane. The enzyme catalyses daunorubicin(in) + ATP + H2O = daunorubicin(out) + ADP + phosphate + H(+). In terms of biological role, energy-dependent efflux transporter responsible for decreased drug accumulation in multidrug-resistant cells. Specifically present in limbal stem cells, where it plays a key role in corneal development and repair. The sequence is that of ATP-binding cassette sub-family B member 5 from Homo sapiens (Human).